The primary structure comprises 211 residues: dITP/XTP pyrophosphatase (211 aa).

13 to 18 (THNPGK) is a substrate binding site. The Mg(2+) site is built by aspartate 45 and aspartate 74. Aspartate 74 (proton acceptor) is an active-site residue. Substrate-binding positions include serine 75, 160 to 163 (FGYD), lysine 183, and 195 to 196 (HR).

The protein belongs to the HAM1 NTPase family. As to quaternary structure, homodimer. Mg(2+) is required as a cofactor.

The catalysed reaction is XTP + H2O = XMP + diphosphate + H(+). The enzyme catalyses dITP + H2O = dIMP + diphosphate + H(+). It carries out the reaction ITP + H2O = IMP + diphosphate + H(+). Functionally, pyrophosphatase that catalyzes the hydrolysis of nucleoside triphosphates to their monophosphate derivatives, with a high preference for the non-canonical purine nucleotides XTP (xanthosine triphosphate), dITP (deoxyinosine triphosphate) and ITP. Seems to function as a house-cleaning enzyme that removes non-canonical purine nucleotides from the nucleotide pool, thus preventing their incorporation into DNA/RNA and avoiding chromosomal lesions. The protein is dITP/XTP pyrophosphatase of Bradyrhizobium diazoefficiens (strain JCM 10833 / BCRC 13528 / IAM 13628 / NBRC 14792 / USDA 110).